The chain runs to 109 residues: MQARNIGLDVSVPEKECTDPHCPFHGNLPVRGQVLTGKVISTAMTRSVVVAREYQQYIPKYERKATKIKKYHVHVPDCIELRVGDTVRFAECRKLAKTISFVVVEKVKQ.

This sequence belongs to the universal ribosomal protein uS17 family. In terms of assembly, part of the 30S ribosomal subunit.

Its function is as follows. One of the primary rRNA binding proteins, it binds specifically to the 5'-end of 16S ribosomal RNA. This is Small ribosomal subunit protein uS17 from Thermoplasma volcanium (strain ATCC 51530 / DSM 4299 / JCM 9571 / NBRC 15438 / GSS1).